A 413-amino-acid polypeptide reads, in one-letter code: Succinate--CoA ligase [ADP-forming] subunit beta, mitochondrial (413 aa).

Residues arginine 1–arginine 2 constitute a mitochondrion transit peptide. One can recognise an ATP-grasp domain in the interval methionine 11–isoleucine 238. Residues lysine 48 and glycine 55 to glycine 57 each bind ATP. Asparagine 208 and aspartate 222 together coordinate Mg(2+). Substrate is bound by residues asparagine 273 and glycine 330–methionine 332.

The protein belongs to the succinate/malate CoA ligase beta subunit family. ATP-specific subunit beta subfamily. In terms of assembly, heterodimer of an alpha and a beta subunit. The beta subunit determines specificity for ATP. Mg(2+) serves as cofactor. In terms of tissue distribution, widely expressed. Not present in liver.

Its subcellular location is the mitochondrion. The catalysed reaction is succinate + ATP + CoA = succinyl-CoA + ADP + phosphate. It functions in the pathway carbohydrate metabolism; tricarboxylic acid cycle; succinate from succinyl-CoA (ligase route): step 1/1. ATP-specific succinyl-CoA synthetase functions in the citric acid cycle (TCA), coupling the hydrolysis of succinyl-CoA to the synthesis of ATP and thus represents the only step of substrate-level phosphorylation in the TCA. The beta subunit provides nucleotide specificity of the enzyme and binds the substrate succinate, while the binding sites for coenzyme A and phosphate are found in the alpha subunit. The sequence is that of Succinate--CoA ligase [ADP-forming] subunit beta, mitochondrial from Columba livia (Rock dove).